Reading from the N-terminus, the 259-residue chain is Keratin-associated protein 10-8 (259 aa).

Residues 26-243 (HVSRVSSPST…SCQPSCCHPA (218 aa)) form a 19 X 5 AA repeats of C-C-X(3) region. 19 repeat units span residues 50–54 (CCEPR), 60–64 (CCTPS), 65–69 (CCAPA), 98–102 (CCQQS), 108–112 (CCTSS), 118–122 (CCVPV), 123–127 (CCKSN), 133–137 (CCVSI), 145–149 (CCQQS), 155–159 (CCTFS), 165–169 (CCVPI), 170–174 (CCKPI), 175–179 (CCVPV), 187–191 (CCQKS), 197–201 (CCTTS), 202–206 (CCRPS), 221–225 (CCVPV), 228–232 (CCVPA), and 239–243 (CCHPA).

Belongs to the KRTAP type 10 family. In terms of assembly, interacts with hair keratins. In terms of tissue distribution, restricted to a narrow region of the hair fiber cuticle, lying approximately 20 cell layers above the apex of the dermal papilla of the hair root; not detected in any other tissues.

Functionally, in the hair cortex, hair keratin intermediate filaments are embedded in an interfilamentous matrix, consisting of hair keratin-associated proteins (KRTAP), which are essential for the formation of a rigid and resistant hair shaft through their extensive disulfide bond cross-linking with abundant cysteine residues of hair keratins. The matrix proteins include the high-sulfur and high-glycine-tyrosine keratins. The chain is Keratin-associated protein 10-8 (KRTAP10-8) from Homo sapiens (Human).